The sequence spans 171 residues: S-ribosylhomocysteine lyase (171 aa).

The Fe cation site is built by His54, His58, and Cys128.

Belongs to the LuxS family. In terms of assembly, homodimer. The cofactor is Fe cation.

It catalyses the reaction S-(5-deoxy-D-ribos-5-yl)-L-homocysteine = (S)-4,5-dihydroxypentane-2,3-dione + L-homocysteine. In terms of biological role, involved in the synthesis of autoinducer 2 (AI-2) which is secreted by bacteria and is used to communicate both the cell density and the metabolic potential of the environment. The regulation of gene expression in response to changes in cell density is called quorum sensing. Catalyzes the transformation of S-ribosylhomocysteine (RHC) to homocysteine (HC) and 4,5-dihydroxy-2,3-pentadione (DPD). The chain is S-ribosylhomocysteine lyase from Escherichia coli (strain 55989 / EAEC).